A 124-amino-acid polypeptide reads, in one-letter code: MSLRIRLARGGAKKRPFYRIVVADSRSPRDGRFIEKLGTFDPMLPRDHERRVVLKDERVKYWLGVGALPSDRVARFLGLSGLTEARKVPEQTKQAQPKAKAQERLREAEEKARAAAEAAASAEG.

The disordered stretch occupies residues 88–124 (VPEQTKQAQPKAKAQERLREAEEKARAAAEAAASAEG). The segment covering 100 to 114 (KAQERLREAEEKARA) has biased composition (basic and acidic residues). Residues 115–124 (AAEAAASAEG) are compositionally biased toward low complexity.

Belongs to the bacterial ribosomal protein bS16 family.

This chain is Small ribosomal subunit protein bS16, found in Rhodospirillum rubrum (strain ATCC 11170 / ATH 1.1.1 / DSM 467 / LMG 4362 / NCIMB 8255 / S1).